A 312-amino-acid polypeptide reads, in one-letter code: Cobalamin biosynthesis protein CobD (312 aa).

4 helical membrane-spanning segments follow: residues 61 to 81 (IALLLAPFTLAAWALARLPLL), 83 to 103 (IIVPVALLYLAVGARSLAQHA), 152 to 172 (DAVFAALFWFLVLGAPGAVLY), and 292 to 312 (GMWLWAALSLAAAILIGAIHA).

It belongs to the CobD/CbiB family.

It localises to the cell membrane. It participates in cofactor biosynthesis; adenosylcobalamin biosynthesis. Functionally, converts cobyric acid to cobinamide by the addition of aminopropanol on the F carboxylic group. This is Cobalamin biosynthesis protein CobD from Chromobacterium violaceum (strain ATCC 12472 / DSM 30191 / JCM 1249 / CCUG 213 / NBRC 12614 / NCIMB 9131 / NCTC 9757 / MK).